Here is a 353-residue protein sequence, read N- to C-terminus: Photosystem II protein D1 (353 aa).

An N-acetylthreonine modification is found at Thr-2. Residue Thr-2 is modified to Phosphothreonine. Helical transmembrane passes span 29–46 (YIGW…TATS), 118–133 (HFLL…EWEL), and 142–156 (WIAV…AATA). A chlorophyll a-binding site is contributed by His-118. Residue Tyr-126 participates in pheophytin a binding. [CaMn4O5] cluster-binding residues include Asp-170 and Glu-189. A helical transmembrane segment spans residues 197–218 (FHMLGVAGVFGGSLFSAMHGSL). His-198 lines the chlorophyll a pocket. Residues His-215 and 264 to 265 (SF) contribute to the a quinone site. His-215 lines the Fe cation pocket. Residue His-272 participates in Fe cation binding. A helical membrane pass occupies residues 274–288 (FLAAWPVVGIWFTAL). Positions 332, 333, 342, and 344 each coordinate [CaMn4O5] cluster. Positions 345-353 (ALEVPSLNG) are excised as a propeptide.

The protein belongs to the reaction center PufL/M/PsbA/D family. In terms of assembly, PSII is composed of 1 copy each of membrane proteins PsbA, PsbB, PsbC, PsbD, PsbE, PsbF, PsbH, PsbI, PsbJ, PsbK, PsbL, PsbM, PsbT, PsbX, PsbY, PsbZ, Psb30/Ycf12, at least 3 peripheral proteins of the oxygen-evolving complex and a large number of cofactors. It forms dimeric complexes. The cofactor is The D1/D2 heterodimer binds P680, chlorophylls that are the primary electron donor of PSII, and subsequent electron acceptors. It shares a non-heme iron and each subunit binds pheophytin, quinone, additional chlorophylls, carotenoids and lipids. D1 provides most of the ligands for the Mn4-Ca-O5 cluster of the oxygen-evolving complex (OEC). There is also a Cl(-1) ion associated with D1 and D2, which is required for oxygen evolution. The PSII complex binds additional chlorophylls, carotenoids and specific lipids.. Post-translationally, tyr-161 forms a radical intermediate that is referred to as redox-active TyrZ, YZ or Y-Z. In terms of processing, C-terminally processed by CTPA; processing is essential to allow assembly of the oxygen-evolving complex and thus photosynthetic growth.

It is found in the plastid. Its subcellular location is the chloroplast thylakoid membrane. The enzyme catalyses 2 a plastoquinone + 4 hnu + 2 H2O = 2 a plastoquinol + O2. In terms of biological role, photosystem II (PSII) is a light-driven water:plastoquinone oxidoreductase that uses light energy to abstract electrons from H(2)O, generating O(2) and a proton gradient subsequently used for ATP formation. It consists of a core antenna complex that captures photons, and an electron transfer chain that converts photonic excitation into a charge separation. The D1/D2 (PsbA/PsbD) reaction center heterodimer binds P680, the primary electron donor of PSII as well as several subsequent electron acceptors. The chain is Photosystem II protein D1 from Lolium perenne (Perennial ryegrass).